The following is a 934-amino-acid chain: 2-oxoglutarate dehydrogenase E1 component (934 aa).

Belongs to the alpha-ketoglutarate dehydrogenase family. As to quaternary structure, homodimer. Part of the 2-oxoglutarate dehydrogenase (OGDH) complex composed of E1 (2-oxoglutarate dehydrogenase), E2 (dihydrolipoamide succinyltransferase) and E3 (dihydrolipoamide dehydrogenase); the complex contains multiple copies of the three enzymatic components (E1, E2 and E3). The cofactor is thiamine diphosphate.

It catalyses the reaction N(6)-[(R)-lipoyl]-L-lysyl-[protein] + 2-oxoglutarate + H(+) = N(6)-[(R)-S(8)-succinyldihydrolipoyl]-L-lysyl-[protein] + CO2. In terms of biological role, E1 component of the 2-oxoglutarate dehydrogenase (OGDH) complex which catalyzes the decarboxylation of 2-oxoglutarate, the first step in the conversion of 2-oxoglutarate to succinyl-CoA and CO(2). The chain is 2-oxoglutarate dehydrogenase E1 component (sucA) from Coxiella burnetii (strain RSA 493 / Nine Mile phase I).